A 248-amino-acid chain; its full sequence is Ubiquinone biosynthesis O-methyltransferase (248 aa).

S-adenosyl-L-methionine contacts are provided by Arg41, Gly72, Asp93, and Met136.

This sequence belongs to the methyltransferase superfamily. UbiG/COQ3 family.

It carries out the reaction a 3-demethylubiquinol + S-adenosyl-L-methionine = a ubiquinol + S-adenosyl-L-homocysteine + H(+). It catalyses the reaction a 3-(all-trans-polyprenyl)benzene-1,2-diol + S-adenosyl-L-methionine = a 2-methoxy-6-(all-trans-polyprenyl)phenol + S-adenosyl-L-homocysteine + H(+). It functions in the pathway cofactor biosynthesis; ubiquinone biosynthesis. Functionally, O-methyltransferase that catalyzes the 2 O-methylation steps in the ubiquinone biosynthetic pathway. The polypeptide is Ubiquinone biosynthesis O-methyltransferase (Rhizobium rhizogenes (strain K84 / ATCC BAA-868) (Agrobacterium radiobacter)).